Consider the following 163-residue polypeptide: NADH-quinone oxidoreductase subunit I (163 aa).

4Fe-4S ferredoxin-type domains are found at residues 54–84 (LRRYPNGEERCIACKLCEAVCPALAITIESD) and 94–123 (TRYDIDLTKCIFCGFCEEACPVDAVVETPI). [4Fe-4S] cluster-binding residues include cysteine 64, cysteine 67, cysteine 70, cysteine 74, cysteine 103, cysteine 106, cysteine 109, and cysteine 113.

The protein belongs to the complex I 23 kDa subunit family. In terms of assembly, NDH-1 is composed of 14 different subunits. Subunits NuoA, H, J, K, L, M, N constitute the membrane sector of the complex. The cofactor is [4Fe-4S] cluster.

It is found in the cell inner membrane. The enzyme catalyses a quinone + NADH + 5 H(+)(in) = a quinol + NAD(+) + 4 H(+)(out). In terms of biological role, NDH-1 shuttles electrons from NADH, via FMN and iron-sulfur (Fe-S) centers, to quinones in the respiratory chain. The immediate electron acceptor for the enzyme in this species is believed to be ubiquinone. Couples the redox reaction to proton translocation (for every two electrons transferred, four hydrogen ions are translocated across the cytoplasmic membrane), and thus conserves the redox energy in a proton gradient. The protein is NADH-quinone oxidoreductase subunit I of Cupriavidus pinatubonensis (strain JMP 134 / LMG 1197) (Cupriavidus necator (strain JMP 134)).